Here is a 730-residue protein sequence, read N- to C-terminus: Stonin-1 (730 aa).

3 disordered regions span residues 1-26 (MYST…KRKD), 38-83 (NGLK…PLST), and 132-159 (SPHV…AGPQ). 2 stretches are compositionally biased toward low complexity: residues 54–65 (PSSASSTPLSSP) and 132–143 (SPHVSLPSSHSH). Positions 269-402 (GWSFMLRIPE…KLPATAKPKN (134 aa)) constitute an SHD domain. The 304-residue stretch at 407–710 (EQEICLDIQD…ACYNIQVEIE (304 aa)) folds into the MHD domain.

This sequence belongs to the Stoned B family.

It localises to the cytoplasm. The protein localises to the membrane. Functionally, may be involved in the endocytic machinery. The protein is Stonin-1 (Ston1) of Mus musculus (Mouse).